Consider the following 153-residue polypeptide: Endoribonuclease YbeY (153 aa).

Zn(2+) contacts are provided by His-119, His-123, and His-129.

It belongs to the endoribonuclease YbeY family. Zn(2+) is required as a cofactor.

Its subcellular location is the cytoplasm. In terms of biological role, single strand-specific metallo-endoribonuclease involved in late-stage 70S ribosome quality control and in maturation of the 3' terminus of the 16S rRNA. This Desulforamulus reducens (strain ATCC BAA-1160 / DSM 100696 / MI-1) (Desulfotomaculum reducens) protein is Endoribonuclease YbeY.